The sequence spans 1274 residues: Polycomb protein Sfmbt (1274 aa).

The interval 266–285 (PSSKQMKGYRNSNSSGTSSA) is disordered. Residues 267-278 (SSKQMKGYRNSN) are compositionally biased toward polar residues. The FCS-type zinc-finger motif lies at 331–366 (PIQKDGMAVCERCGAIGVKHTFYTKSRRFCSMACAR). Positions 340, 343, 360, and 364 each coordinate Zn(2+). Residues 381 to 394 (TGATTSNNQSTSSS) are compositionally biased toward low complexity. Disordered regions lie at residues 381 to 401 (TGATTSNNQSTSSSPLPAASG) and 488 to 510 (PGGEANGSGNDTSTPNTASSGYL). Over residues 494-509 (GSGNDTSTPNTASSGY) the composition is skewed to polar residues. 4 MBT repeats span residues 564 to 675 (YDWL…LIPP), 683 to 781 (KDWK…LAAP), 789 to 899 (LAGR…VTPP), and 907 to 1003 (FTWE…LEGP). Disordered stretches follow at residues 1007–1063 (SYQQ…TTPH) and 1083–1167 (YENN…NSSA). The segment covering 1019–1028 (KVPRKKKTKK) has biased composition (basic residues). Residues 1038 to 1050 (AKQQNDNTQTTQT) are compositionally biased toward low complexity. Over residues 1087–1114 (QPEDGDGDEEDPDPDADADLDADADGDG) the composition is skewed to acidic residues. 2 stretches are compositionally biased toward polar residues: residues 1117 to 1128 (STSHISEQSTTH) and 1158 to 1167 (GNSNKMNSSA). In terms of domain architecture, SAM spans 1194–1258 (WNVYDVSQFL…DLITQLKCKV (65 aa)).

In terms of assembly, interacts with pho as a component of the pho-repressive complex (PhoRC).

The protein localises to the nucleus. Functionally, polycomb group (PcG) protein that binds to the Polycomb response elements (PREs) found in the regulatory regions of many genes. PcG proteins act by forming multiprotein complexes, which are required to maintain the transcriptionally repressive state of homeotic genes throughout development. PcG proteins are not required to initiate repression, but to maintain it during later stages of development. They probably act via the methylation of histones, rendering chromatin heritably changed in its expressibility. Necessary but not sufficient to recruit a functional PcG repressive complex that represses target genes, suggesting that the recruitment of the distinct PRC1 complex is also required to allow a subsequent repression. This is Polycomb protein Sfmbt from Drosophila pseudoobscura pseudoobscura (Fruit fly).